Reading from the N-terminus, the 185-residue chain is dCTP deaminase (185 aa).

107–112 contributes to the dCTP binding site; it reads KSTYAR. The Proton donor/acceptor role is filled by glutamate 133. 3 residues coordinate dCTP: glutamine 152, tyrosine 166, and glutamine 176.

The protein belongs to the dCTP deaminase family. Homotrimer.

The catalysed reaction is dCTP + H2O + H(+) = dUTP + NH4(+). It participates in pyrimidine metabolism; dUMP biosynthesis; dUMP from dCTP (dUTP route): step 1/2. Functionally, catalyzes the deamination of dCTP to dUTP. This is dCTP deaminase from Nitratiruptor sp. (strain SB155-2).